A 107-amino-acid chain; its full sequence is Probable 4-amino-4-deoxy-L-arabinose-phosphoundecaprenol flippase subunit ArnE (107 aa).

The 75-residue stretch at 31–105 (RVWGWLALSL…IIVGIILLGG (75 aa)) folds into the EamA domain. The next 3 helical transmembrane spans lie at 34-54 (GWLA…LFVL), 57-77 (VPVS…TLAA), and 85-105 (IALR…LLGG).

The protein belongs to the ArnE family. In terms of assembly, heterodimer of ArnE and ArnF.

Its subcellular location is the cell inner membrane. It participates in bacterial outer membrane biogenesis; lipopolysaccharide biosynthesis. Its function is as follows. Translocates 4-amino-4-deoxy-L-arabinose-phosphoundecaprenol (alpha-L-Ara4N-phosphoundecaprenol) from the cytoplasmic to the periplasmic side of the inner membrane. The chain is Probable 4-amino-4-deoxy-L-arabinose-phosphoundecaprenol flippase subunit ArnE from Enterobacter sp. (strain 638).